We begin with the raw amino-acid sequence, 172 residues long: General stress protein 18 (172 aa).

In terms of domain architecture, PfpI endopeptidase spans 3-171; it reads KKIAVVLTYY…FNRESLALLE (169 aa). The active-site Nucleophile is C104. H105 is a catalytic residue.

Belongs to the peptidase C56 family.

In terms of biological role, functions in the protection against aldehyde-stress, possibly by degrading damaged proteins. This chain is General stress protein 18 (yfkM), found in Bacillus subtilis (strain 168).